Reading from the N-terminus, the 61-residue chain is Putative protein RenD (61 aa).

The protein is Putative protein RenD (renD) of Escherichia coli (strain K12).